We begin with the raw amino-acid sequence, 371 residues long: Glyco-Gag protein (371 aa).

The Cytoplasmic segment spans residues 1-51 (MSGASSGTAIGAHLFGVSPEYRVLIGDEGAGPSKSLSEVSFSVWYRSRAAR). The chain crosses the membrane as a helical span at residues 52–72 (LVILCLVASFLVPCLTFLIAE). Residues 73-371 (AVMGQTVTTP…NVIDETFPLT (299 aa)) lie on the Extracellular side of the membrane. N134 carries an N-linked (GlcNAc...) asparagine; by host glycan. 2 disordered regions span residues 171-281 (VRPF…NNRP) and 350-371 (VPGE…FPLT). Pro residues predominate over residues 174 to 193 (FLPPPKPPTPLPQPLSPQPS). The segment covering 194–203 (APLTSSLYPV) has biased composition (low complexity). 2 stretches are compositionally biased toward pro residues: residues 204 to 220 (VPKP…PDPS) and 230 to 245 (EPPP…PSGP).

In terms of processing, glycosylated by host. Post-translationally, cleaved by host near the middle of the molecule, releasing the c-terminal half containing capsid and nucleoprotein domains op GAG.

Its subcellular location is the host cell membrane. Plays a role in viral particle release. Presumably acts by facilitating the fission of the virion bud at the cell surface. This chain is Glyco-Gag protein, found in Feline sarcoma virus (strain Snyder-Theilen).